A 342-amino-acid chain; its full sequence is Heat-inducible transcription repressor HrcA (342 aa).

It belongs to the HrcA family.

Negative regulator of class I heat shock genes (grpE-dnaK-dnaJ and groELS operons). Prevents heat-shock induction of these operons. The sequence is that of Heat-inducible transcription repressor HrcA from Methylibium petroleiphilum (strain ATCC BAA-1232 / LMG 22953 / PM1).